The primary structure comprises 426 residues: Glutamate-1-semialdehyde 2,1-aminomutase (426 aa).

Lysine 264 carries the N6-(pyridoxal phosphate)lysine modification.

This sequence belongs to the class-III pyridoxal-phosphate-dependent aminotransferase family. HemL subfamily. Pyridoxal 5'-phosphate serves as cofactor.

The protein resides in the cytoplasm. It catalyses the reaction (S)-4-amino-5-oxopentanoate = 5-aminolevulinate. It participates in porphyrin-containing compound metabolism; protoporphyrin-IX biosynthesis; 5-aminolevulinate from L-glutamyl-tRNA(Glu): step 2/2. The chain is Glutamate-1-semialdehyde 2,1-aminomutase from Methanocella arvoryzae (strain DSM 22066 / NBRC 105507 / MRE50).